A 179-amino-acid chain; its full sequence is ATP-dependent protease subunit HslV (179 aa).

The active site involves Thr8. The Na(+) site is built by Gly163, Cys166, and Thr169.

Belongs to the peptidase T1B family. HslV subfamily. In terms of assembly, a double ring-shaped homohexamer of HslV is capped on each side by a ring-shaped HslU homohexamer. The assembly of the HslU/HslV complex is dependent on binding of ATP.

It is found in the cytoplasm. The catalysed reaction is ATP-dependent cleavage of peptide bonds with broad specificity.. Allosterically activated by HslU binding. Functionally, protease subunit of a proteasome-like degradation complex believed to be a general protein degrading machinery. In Solibacter usitatus (strain Ellin6076), this protein is ATP-dependent protease subunit HslV.